The chain runs to 604 residues: Structure-specific endonuclease subunit MUS81 (604 aa).

Disordered regions lie at residues 93 to 138 (AAVH…REYV), 227 to 248 (KLDSEETGTRHEDVDSQDGQNV), and 253 to 272 (LEEEDEDEEKESWSSERPAV). Basic and acidic residues-rich tracts occupy residues 116–128 (EHTKLTQKEVRKE) and 227–240 (KLDSEETGTRHEDV). A winged helix domain (WHD); critical for endonuclease activity region spans residues 138-254 (VPQKRSGGYA…GQNVVDLTLE (117 aa)). The segment covering 253 to 262 (LEEEDEDEEK) has biased composition (acidic residues). One can recognise an ERCC4 domain in the interval 314–423 (VLCVDLCETT…KPIYLVEECG (110 aa)). Residues D318, E321, and D353 contribute to the active site. Residues D318, E321, D353, E384, and R385 each coordinate Mg(2+). A helix-hairpin-helix (2HhH); involved in DNA recognition and bending region spans residues 524-598 (VREVFARQLM…LSRTIYQLYC (75 aa)).

Belongs to the XPF family. As to quaternary structure, part of the heterodimeric DNA structure-specific endonuclease complex MUS81-EME1. Part of the heterodimeric DNA structure-specific endonuclease complex MUS81-EME2. Mg(2+) is required as a cofactor.

The protein localises to the nucleus. The protein resides in the nucleolus. In terms of biological role, catalytic subunit of two functionally distinct, structure-specific, heterodimeric DNA endonucleases MUS81-EME1 and MUS81-EME2 that are involved in the maintenance of genome stability. Both endonucleases have essentially the same substrate specificity though MUS81-EME2 is more active than its MUS81-EME1 counterpart. Both cleave 3'-flaps and nicked Holliday junctions, and exhibit limited endonuclease activity with 5' flaps and nicked double-stranded DNAs. MUS81-EME2 which is active during the replication of DNA is more specifically involved in replication fork processing. Replication forks frequently encounter obstacles to their passage, including DNA base lesions, DNA interstrand cross-links, difficult-to-replicate sequences, transcription bubbles, or tightly bound proteins. One mechanism for the restart of a stalled replication fork involves nucleolytic cleavage mediated by the MUS81-EME2 endonuclease. By acting upon the stalled fork, MUS81-EME2 generates a DNA double-strand break (DSB) that can be repaired by homologous recombination, leading to the restoration of an active fork. MUS81-EME2 could also function in telomere maintenance. MUS81-EME1, on the other hand, is active later in the cell cycle and functions in the resolution of mitotic recombination intermediates including the Holliday junctions, the four-way DNA intermediates that form during homologous recombination. The chain is Structure-specific endonuclease subunit MUS81 (mus81) from Danio rerio (Zebrafish).